We begin with the raw amino-acid sequence, 122 residues long: Small ribosomal subunit protein uS13 (122 aa).

Residues 93–122 (RLSLPVRGQRTKTNSRTRKGKRKTVAGKKK) are disordered. A compositionally biased stretch (basic residues) spans 101-122 (QRTKTNSRTRKGKRKTVAGKKK).

It belongs to the universal ribosomal protein uS13 family. In terms of assembly, part of the 30S ribosomal subunit. Forms a loose heterodimer with protein S19. Forms two bridges to the 50S subunit in the 70S ribosome.

Located at the top of the head of the 30S subunit, it contacts several helices of the 16S rRNA. In the 70S ribosome it contacts the 23S rRNA (bridge B1a) and protein L5 of the 50S subunit (bridge B1b), connecting the 2 subunits; these bridges are implicated in subunit movement. Contacts the tRNAs in the A and P-sites. In Chlamydia pneumoniae (Chlamydophila pneumoniae), this protein is Small ribosomal subunit protein uS13.